The following is a 316-amino-acid chain: Ribonuclease Z (316 aa).

Zn(2+) contacts are provided by His59, His61, Asp63, His64, His135, Asp203, and His261. The active-site Proton acceptor is the Asp63.

Belongs to the RNase Z family. Homodimer. Zn(2+) serves as cofactor.

It carries out the reaction Endonucleolytic cleavage of RNA, removing extra 3' nucleotides from tRNA precursor, generating 3' termini of tRNAs. A 3'-hydroxy group is left at the tRNA terminus and a 5'-phosphoryl group is left at the trailer molecule.. Functionally, zinc phosphodiesterase, which displays some tRNA 3'-processing endonuclease activity. Probably involved in tRNA maturation, by removing a 3'-trailer from precursor tRNA. The chain is Ribonuclease Z from Nanoarchaeum equitans (strain Kin4-M).